The chain runs to 1082 residues: TNF receptor-associated factor homolog 1b (1082 aa).

The segment at 1–54 (MAEAVDEDSGVGRSLEESSNGQHSQAGEALSEWRSSGQVENGTPSTSPSYWDID) is disordered. Position 2 is an N-acetylalanine (alanine 2). Residues 33-49 (WRSSGQVENGTPSTSPS) are compositionally biased toward polar residues. One can recognise an MATH domain in the interval 67–198 (YGQYTWKIPK…SGCLTIEAKV (132 aa)). Disordered regions lie at residues 358 to 388 (LPPK…ERDE), 440 to 666 (TEQR…SNVG), 697 to 762 (SIVN…QVVL), 780 to 800 (LSAP…APII), 812 to 841 (SSVQ…NQQT), and 858 to 889 (SSSS…PTSS). Composition is skewed to basic and acidic residues over residues 359–388 (PPKD…ERDE) and 440–453 (TEQR…EREK). Residues 446 to 507 (RGAAEREKKS…EEEKDSVTEK (62 aa)) are a coiled coil. Basic residues predominate over residues 454–471 (KSKKKQAKQKRNKNKGKD). A compositionally biased stretch (basic and acidic residues) spans 472 to 488 (KRKEEKVSFATHAKDLE). 2 stretches are compositionally biased toward low complexity: residues 519-534 (GDVS…SADI) and 560-573 (SSEG…ISIS). Polar residues-rich tracts occupy residues 588–630 (DDSS…QQVK) and 645–666 (QPST…SNVG). Low complexity-rich tracts occupy residues 858–871 (SSSS…SSHG) and 878–889 (PSSSYSQAPTSS).

As to quaternary structure, forms homooligomers. Interacts with SNC1, RPS2 and CPR1/CPR30. Interacts with ATG6.

The protein localises to the cytoplasm. Its subcellular location is the cell membrane. Its function is as follows. Functions redundantly with TRAF1A in the regulation of plant immune response. Contributes to the turnover of the nucleotide-binding domain and leucine-rich repeat-containing (NB-LRR) immune receptors SNC1 and RPS2. May associate with an E3 ubiquitin-protein ligase complex, which modulates ubiquitination and subsequent degradation of NB-LRR immune sensors to maintain their homeostasis. Functions redundantly with TRAF1A in the regulation of autophagosome formation. Required for SINAT1- and SINAT2-mediated ubiquitination and destabilization of ATG6. Functions as a molecular adapter that helps to regulate autophagy by modulating ATG6 stability. This Arabidopsis thaliana (Mouse-ear cress) protein is TNF receptor-associated factor homolog 1b.